A 344-amino-acid chain; its full sequence is Probable nicotinate-nucleotide adenylyltransferase/Ap4A hydrolase (344 aa).

A naMN adenylyltransferase region spans residues 1–182 (MIFGGAFDPL…YIHQHNIYLK (182 aa)). Positions 191–344 (EPRMQHCLRV…LKYVRSLQKN (154 aa)) are ap4A hydrolase. The HD domain occupies 193 to 304 (RMQHCLRVGQ…IYLADKLEPM (112 aa)). His-196 contributes to the ADP binding site. Fe cation is bound by residues His-196, His-225, and Asp-226. Residues 226 to 229 (DLAK), His-255, 281 to 282 (HT), Asp-299, and Arg-305 each bind ADP. Asp-299 lines the Fe cation pocket.

In the N-terminal section; belongs to the NadD family. It in the C-terminal section; belongs to the Ap4A hydrolase YqeK family.

It catalyses the reaction nicotinate beta-D-ribonucleotide + ATP + H(+) = deamido-NAD(+) + diphosphate. It carries out the reaction P(1),P(4)-bis(5'-adenosyl) tetraphosphate + H2O = 2 ADP + 2 H(+). The protein operates within cofactor biosynthesis; NAD(+) biosynthesis; deamido-NAD(+) from nicotinate D-ribonucleotide: step 1/1. Functionally, catalyzes the reversible adenylation of nicotinate mononucleotide (NaMN) to nicotinic acid adenine dinucleotide (NaAD). Its function is as follows. Hydrolyzes diadenosine 5',5'''-P1,P4-tetraphosphate (Ap4A) to yield ADP. The sequence is that of Probable nicotinate-nucleotide adenylyltransferase/Ap4A hydrolase from Mycoplasma pneumoniae (strain ATCC 29342 / M129 / Subtype 1) (Mycoplasmoides pneumoniae).